Consider the following 309-residue polypeptide: DNA-directed RNA polymerase subunit alpha (309 aa).

The interval 1 to 227 is alpha N-terminal domain (alpha-NTD); sequence MTFQVECVES…ALFEPLKNVS (227 aa). Positions 237-309 are alpha C-terminal domain (alpha-CTD); sequence EPTPESQTPI…GIKLQESKVS (73 aa).

The protein belongs to the RNA polymerase alpha chain family. In terms of assembly, in cyanobacteria the RNAP catalytic core is composed of 2 alpha, 1 beta, 1 beta', 1 gamma and 1 omega subunit. When a sigma factor is associated with the core the holoenzyme is formed, which can initiate transcription.

It carries out the reaction RNA(n) + a ribonucleoside 5'-triphosphate = RNA(n+1) + diphosphate. Functionally, DNA-dependent RNA polymerase catalyzes the transcription of DNA into RNA using the four ribonucleoside triphosphates as substrates. The chain is DNA-directed RNA polymerase subunit alpha from Synechococcus elongatus (strain ATCC 33912 / PCC 7942 / FACHB-805) (Anacystis nidulans R2).